The chain runs to 191 residues: Probable molybdenum cofactor guanylyltransferase (191 aa).

GTP contacts are provided by residues 6–8 (LAG), K18, D67, and D92. D92 provides a ligand contact to Mg(2+).

This sequence belongs to the MobA family. Mg(2+) is required as a cofactor.

The protein localises to the cytoplasm. It catalyses the reaction Mo-molybdopterin + GTP + H(+) = Mo-molybdopterin guanine dinucleotide + diphosphate. Functionally, transfers a GMP moiety from GTP to Mo-molybdopterin (Mo-MPT) cofactor (Moco or molybdenum cofactor) to form Mo-molybdopterin guanine dinucleotide (Mo-MGD) cofactor. The sequence is that of Probable molybdenum cofactor guanylyltransferase from Thermococcus gammatolerans (strain DSM 15229 / JCM 11827 / EJ3).